The following is a 226-amino-acid chain: Probable peroxiredoxin prdx-3 (226 aa).

Positions 33-191 (LGPKNTVPAF…TLRVLKAFQF (159 aa)) constitute a Thioredoxin domain. Cysteine 78 functions as the Cysteine sulfenic acid (-SOH) intermediate in the catalytic mechanism.

Belongs to the peroxiredoxin family. AhpC/Prx1 subfamily. Homodimer; disulfide-linked, upon oxidation.

The catalysed reaction is a hydroperoxide + [thioredoxin]-dithiol = an alcohol + [thioredoxin]-disulfide + H2O. In terms of biological role, thiol-specific peroxidase that catalyzes the reduction of hydrogen peroxide and organic hydroperoxides to water and alcohols, respectively. Plays a role in cell protection against oxidative stress by detoxifying peroxides and as sensor of hydrogen peroxide-mediated signaling events. The sequence is that of Probable peroxiredoxin prdx-3 (prdx-3) from Caenorhabditis elegans.